The following is a 235-amino-acid chain: Chalcone--flavanone isomerase 1 (235 aa).

2 residues coordinate substrate: Thr50 and Ser192.

The protein belongs to the chalcone isomerase family.

It carries out the reaction a chalcone = a flavanone.. It participates in secondary metabolite biosynthesis; flavonoid biosynthesis. Its function is as follows. Catalyzes the intramolecular cyclization of bicyclic chalcones into tricyclic (S)-flavanones. Responsible for the isomerization of 4,2',4',6'-tetrahydroxychalcone (also termed chalcone) into naringenin. This chain is Chalcone--flavanone isomerase 1 (CHI1), found in Chrysanthemum morifolium (Florist's daisy).